A 418-amino-acid polypeptide reads, in one-letter code: Putative F-box protein At3g23950 (418 aa).

An F-box domain is found at 1-42; it reads MNIPPELTFEVLVRLPLKSLARFRSMCKEWKLVIDSEFFRDC.

The sequence is that of Putative F-box protein At3g23950 from Arabidopsis thaliana (Mouse-ear cress).